The following is a 743-amino-acid chain: UvrABC system protein C (743 aa).

The GIY-YIG domain maps to V16–V95. The UVR domain occupies D208–A243. Disordered regions lie at residues A497–R543 and P694–E743. Over residues Q506–G520 the composition is skewed to acidic residues. The segment covering Q734–E743 has biased composition (polar residues).

It belongs to the UvrC family. Interacts with UvrB in an incision complex.

The protein localises to the cytoplasm. Functionally, the UvrABC repair system catalyzes the recognition and processing of DNA lesions. UvrC both incises the 5' and 3' sides of the lesion. The N-terminal half is responsible for the 3' incision and the C-terminal half is responsible for the 5' incision. The chain is UvrABC system protein C from Rhodococcus opacus (strain B4).